The sequence spans 148 residues: Cuticle protein CP1499 (148 aa).

In terms of tissue distribution, calcified shell.

This chain is Cuticle protein CP1499, found in Cancer pagurus (Rock crab).